Reading from the N-terminus, the 1022-residue chain is Protein translocase subunit SECA1, chloroplastic (1022 aa).

Residues 1–72 (MVSPLCDSQL…SRKRSTSVNA (72 aa)) constitute a chloroplast transit peptide. Residue S73 is modified to N-acetylserine. 176–183 (MRTGEGKT) lines the ATP pocket. A disordered region spans residues 985 to 1022 (KDEEKKSQNGKPSKQVDNASEKPKQVGVTDEPSSIASA). Positions 993 to 1002 (NGKPSKQVDN) are enriched in polar residues.

It belongs to the SecA family. Part of the Sec protein translocation apparatus. Interacts probably with SCY1. As to expression, expressed in green tissues, including cotyledons, rosette and cauline leaves, and sepals. Also detected at the base and the tip of the trichome.

It localises to the plastid. The protein localises to the chloroplast stroma. The protein resides in the chloroplast thylakoid membrane. The enzyme catalyses ATP + H2O + chloroplast-proteinSide 1 = ADP + phosphate + chloroplast-proteinSide 2.. Has a central role in coupling the hydrolysis of ATP to the transfer of proteins across the thylakoid membrane. Involved in photosynthetic acclimation and required for chloroplast biogenesis. This is Protein translocase subunit SECA1, chloroplastic from Arabidopsis thaliana (Mouse-ear cress).